Reading from the N-terminus, the 741-residue chain is NUT family member 2G (741 aa).

Disordered stretches follow at residues 172–200 (PGNA…PDDS), 293–375 (IQKS…PEEI), 391–424 (LGSH…SDPG), 496–624 (RAAP…LPGM), and 638–741 (RLSQ…HCSQ). Pro residues predominate over residues 304 to 321 (SLPPPAPPRLEPRGPPAP). Residues 402-412 (EGQREKGKVEQ) show a composition bias toward basic and acidic residues. Residues 528 to 545 (QRVSVETSPPQTAAQDPQ) show a composition bias toward polar residues. Over residues 639-650 (LSQSPVPSSGLL) the composition is skewed to low complexity. Over residues 731-741 (SRRKKKRHCSQ) the composition is skewed to basic residues.

This sequence belongs to the NUT family.

The protein is NUT family member 2G (NUTM2G) of Homo sapiens (Human).